Reading from the N-terminus, the 81-residue chain is MAHKTGQSSSSNGRESKSKRLGVKTFGGQKVLAGTIIIRQRGTRLHAGRNVGTGRDWTLFALKDGVVKFDKPHRRVEIVAS.

A disordered region spans residues 1-22 (MAHKTGQSSSSNGRESKSKRLG).

The protein belongs to the bacterial ribosomal protein bL27 family.

The chain is Large ribosomal subunit protein bL27 from Opitutus terrae (strain DSM 11246 / JCM 15787 / PB90-1).